The primary structure comprises 345 residues: MNNSYGEIIKISTFGESHGLIIGALIDGFFSNLYISEKFIQKNLNLRKPFTSLFSTQRREQDKVKIFTGIFKNKTTGAPVLMLIKNNDKQSSDYNNISLNFRPGHADYTYFLKYKFRDYRGGGRSSARETACRVASGCVFKNLIYNKGVIVRSYIKKIGFLKINFKYWNYTLNRFFSNLLFINEIKDIINNCKNSCNSLSSEIVIIINGLEPSLGDPLYKKINSTISNYLLSINATKSICFGFNFKNKNSFQVKDEIKNSGFTSNNNGGILAGITNGQPLVIKILFKPTSSTSRKIKTINEKLKNITNKTYGRHDPCVGLRAVPVIESMLYTILINKILKKKIYE.

This sequence belongs to the chorismate synthase family. As to quaternary structure, homotetramer. It depends on FMNH2 as a cofactor.

It carries out the reaction 5-O-(1-carboxyvinyl)-3-phosphoshikimate = chorismate + phosphate. The protein operates within metabolic intermediate biosynthesis; chorismate biosynthesis; chorismate from D-erythrose 4-phosphate and phosphoenolpyruvate: step 7/7. The chain is Chorismate synthase (aroC) from Carsonella ruddii (strain PV).